The chain runs to 451 residues: 3-phosphoshikimate 1-carboxyvinyltransferase (451 aa).

3 residues coordinate 3-phosphoshikimate: K30, S31, and R35. Residue K30 coordinates phosphoenolpyruvate. Phosphoenolpyruvate is bound by residues G101 and R130. Residues S176, S177, Q178, D321, and K348 each coordinate 3-phosphoshikimate. Q178 contacts phosphoenolpyruvate. D321 serves as the catalytic Proton acceptor. Phosphoenolpyruvate-binding residues include R352 and Q422.

The protein belongs to the EPSP synthase family. In terms of assembly, monomer.

Its subcellular location is the cytoplasm. The enzyme catalyses 3-phosphoshikimate + phosphoenolpyruvate = 5-O-(1-carboxyvinyl)-3-phosphoshikimate + phosphate. It participates in metabolic intermediate biosynthesis; chorismate biosynthesis; chorismate from D-erythrose 4-phosphate and phosphoenolpyruvate: step 6/7. In terms of biological role, catalyzes the transfer of the enolpyruvyl moiety of phosphoenolpyruvate (PEP) to the 5-hydroxyl of shikimate-3-phosphate (S3P) to produce enolpyruvyl shikimate-3-phosphate and inorganic phosphate. The polypeptide is 3-phosphoshikimate 1-carboxyvinyltransferase (Burkholderia pseudomallei (strain K96243)).